Here is an 821-residue protein sequence, read N- to C-terminus: Epidermal growth factor receptor kinase substrate 8 (821 aa).

2 stretches are compositionally biased toward polar residues: residues 1 to 10 (MNGHMSNRSS) and 17 to 28 (SQLNGYGSSPPY). Residues 1-39 (MNGHMSNRSSGYGVYPSQLNGYGSSPPYSQMDREHSSRT) are disordered. Phosphoserine is present on serine 58. The PTB domain occupies 64-194 (QYRVEHLTTF…SDSKGGKQKR (131 aa)). Disordered regions lie at residues 204–224 (KADPGIPPPPRAPAPVPPGTV), 295–320 (SELSKRKKSKKSKRKGPGEGVLTLRA), and 461–525 (ANAE…RNYD). Over residues 208–221 (GIPPPPRAPAPVPP) the composition is skewed to pro residues. A Phosphothreonine modification is found at threonine 223. The span at 299–309 (KRKKSKKSKRK) shows a compositional bias: basic residues. Residue threonine 317 is modified to Phosphothreonine. A compositionally biased stretch (basic and acidic residues) spans 464 to 476 (EHQRKQDSKRLST). Phosphoserine is present on serine 475. The SH3 domain occupies 530–589 (QPKKYAKSKYDFVARNSSELSVMKDDVLEILDDRRQWWKVRNASGDSGFVPNNILDIMRT). The disordered stretch occupies residues 610-683 (TEYGLRSADT…YKQLPVDRRK (74 aa)). A compositionally biased stretch (pro residues) spans 622–641 (APSPPPTPAPVPVPLPPSVP). Serine 624 carries the post-translational modification Phosphoserine; by MAPK. Threonine 628 bears the Phosphothreonine; by MAPK mark. Residues 642–651 (APVSVPKVPA) show a composition bias toward low complexity. Residues 648–821 (KVPANVTRQN…VESFDEGSSH (174 aa)) form an effector region region. Phosphoserine is present on residues serine 658 and serine 661. Over residues 670 to 683 (DSQRYKQLPVDRRK) the composition is skewed to basic and acidic residues. Positions 679–697 (VDRRKSQMEEVQDELFQRL) are amphipathic helix. Serine 684 carries the phosphoserine modification. Helix bundle regions lie at residues 717–737 (VINITYDSSPEEVKTWLQSKG), 751–756 (GAQLFS), 761–766 (ELRSVC), and 765–784 (VCPEGARVFNQITVQKAALE). The tract at residues 800–821 (QEKISAAASDSGVESFDEGSSH) is disordered. Phosphoserine occurs at positions 810 and 814.

The protein belongs to the EPS8 family. Homodimer. Part of a complex consisting of ABI1, EPS8 and SOS1. Interacts with BAIAP2. Interacts with SHB and LANCL1. Interacts with EGFR; mediates EPS8 phosphorylation. Interacts with MYO15A and WHRN. Ubiquitinated by the SCF(FBXW5) E3 ubiquitin-protein ligase complex during G2 phase, leading to its transient degradation and subsequent cell shape changes required to allow mitotic progression. Reappears at the midzone of dividing cells. In terms of processing, phosphorylation at Ser-624 and Thr-628 by MAPK following BDNF treatment promotes removal from actin and filopodia formation. Phosphorylated by several receptor tyrosine kinases. Expressed in neuronal cell body and neurites, and prominently enriched in the axonal growth cone. Expressed at the tips of cochlear hair cells stereocilia.

The protein resides in the cytoplasm. Its subcellular location is the cell cortex. It is found in the cell projection. It localises to the ruffle membrane. The protein localises to the growth cone. The protein resides in the stereocilium. Its subcellular location is the synapse. It is found in the synaptosome. Its function is as follows. Signaling adapter that controls various cellular protrusions by regulating actin cytoskeleton dynamics and architecture. Depending on its association with other signal transducers, can regulate different processes. Together with SOS1 and ABI1, forms a trimeric complex that participates in transduction of signals from Ras to Rac by activating the Rac-specific guanine nucleotide exchange factor (GEF) activity. Acts as a direct regulator of actin dynamics by binding actin filaments and has both barbed-end actin filament capping and actin bundling activities depending on the context. Displays barbed-end actin capping activity when associated with ABI1, thereby regulating actin-based motility process: capping activity is auto-inhibited and inhibition is relieved upon ABI1 interaction. Also shows actin bundling activity when associated with BAIAP2, enhancing BAIAP2-dependent membrane extensions and promoting filopodial protrusions. Involved in the regulation of processes such as axonal filopodia growth, stereocilia length, dendritic cell migration and cancer cell migration and invasion. Acts as a regulator of axonal filopodia formation in neurons: in the absence of neurotrophic factors, negatively regulates axonal filopodia formation via actin-capping activity. In contrast, it is phosphorylated in the presence of BDNF leading to inhibition of its actin-capping activity and stimulation of filopodia formation. Component of a complex with WHRN and MYO15A that localizes at stereocilia tips and is required for elongation of the stereocilia actin core. Indirectly involved in cell cycle progression; its degradation following ubiquitination being required during G2 phase to promote cell shape changes. The polypeptide is Epidermal growth factor receptor kinase substrate 8 (Eps8) (Mus musculus (Mouse)).